The following is a 469-amino-acid chain: ATP synthase subunit beta (469 aa).

Residue 156 to 163 coordinates ATP; that stretch reads GGAGVGKT.

This sequence belongs to the ATPase alpha/beta chains family. F-type ATPases have 2 components, CF(1) - the catalytic core - and CF(0) - the membrane proton channel. CF(1) has five subunits: alpha(3), beta(3), gamma(1), delta(1), epsilon(1). CF(0) has three main subunits: a(1), b(2) and c(9-12). The alpha and beta chains form an alternating ring which encloses part of the gamma chain. CF(1) is attached to CF(0) by a central stalk formed by the gamma and epsilon chains, while a peripheral stalk is formed by the delta and b chains.

It is found in the cell membrane. It catalyses the reaction ATP + H2O + 4 H(+)(in) = ADP + phosphate + 5 H(+)(out). Functionally, produces ATP from ADP in the presence of a proton gradient across the membrane. The catalytic sites are hosted primarily by the beta subunits. The chain is ATP synthase subunit beta from Bacillus anthracis (strain CDC 684 / NRRL 3495).